The following is a 341-amino-acid chain: Krueppel-like factor 17 (341 aa).

A disordered region spans residues Val214–Val252. Polar residues predominate over residues Ser238–Val252. 3 consecutive C2H2-type zinc fingers follow at residues Tyr256–His280, Phe286–His310, and His316–His338.

The protein belongs to the Sp1 C2H2-type zinc-finger protein family. As to expression, exclusively expressed in testis and ovary. Localized to step 3-8 spermatids in testis and growing oocytes in ovary.

Its subcellular location is the nucleus. Transcription repressor that binds to the promoter of target genes and prevents their expression. Acts as a negative regulator of epithelial-mesenchymal transition and metastasis in breast cancer. Specifically binds the 5'-CACCC-3' sequence in the promoter of ID1, a key metastasis regulator in breast cancer, and repress its expression. May be a germ cell-specific transcription factor that plays important roles in spermatid differentiation and oocyte development. The chain is Krueppel-like factor 17 (Klf17) from Mus musculus (Mouse).